Consider the following 332-residue polypeptide: Glyceraldehyde-3-phosphate dehydrogenase 2 (332 aa).

NAD(+)-binding residues include R11, I12, and D33. Glycyl lysine isopeptide (Lys-Gly) (interchain with G-Cter in ubiquitin) cross-links involve residues K46 and K63. T120 is an NAD(+) binding site. Residues S149–T151, T180, T209–G210, and R232 each bind D-glyceraldehyde 3-phosphate. Catalysis depends on C150, which acts as the Nucleophile. The residue at position 302 (S302) is a Phosphoserine. Residues N314 and Y318 each coordinate NAD(+).

This sequence belongs to the glyceraldehyde-3-phosphate dehydrogenase family. In terms of assembly, homotetramer.

The protein localises to the cytoplasm. It catalyses the reaction D-glyceraldehyde 3-phosphate + phosphate + NAD(+) = (2R)-3-phospho-glyceroyl phosphate + NADH + H(+). The catalysed reaction is NADH + H2O = (6R)-NADHX. The enzyme catalyses NADH + H2O = (6S)-NADHX. It carries out the reaction NADPH + H2O = (6R)-NADPHX. It catalyses the reaction NADPH + H2O = (6S)-NADPHX. The protein operates within carbohydrate degradation; glycolysis; pyruvate from D-glyceraldehyde 3-phosphate: step 1/5. Functionally, glyceraldehyde-3-phosphate dehydrogenase (GAPDH) involved in glycolysis and gluconeogenesis. Catalyzes the reaction of glyceraldehyde-3-phosphate to 1,3 bis-phosphoglycerate. The contribution of the TDH1, TDH2, and TDH3 to the total glyceraldehyde-3-phosphate dehydrogenase activity is 10-15, 25-30, and 50-60%, respectively. In terms of biological role, as a side activity, catalyzes the hydration of the nicotinamide ring of NADH or NADPH at the C6 position to give the corresponding hydrates, NADHX and NADPHX, which exist as R and S epimers, that cannot act as electron donors or acceptors and inhibit several dehydrogenases, making them toxic. In Saccharomyces cerevisiae (strain ATCC 204508 / S288c) (Baker's yeast), this protein is Glyceraldehyde-3-phosphate dehydrogenase 2.